The chain runs to 160 residues: Small ribosomal subunit protein uS9 (160 aa).

It belongs to the universal ribosomal protein uS9 family.

The polypeptide is Small ribosomal subunit protein uS9 (Cereibacter sphaeroides (strain ATCC 17029 / ATH 2.4.9) (Rhodobacter sphaeroides)).